Reading from the N-terminus, the 369-residue chain is Glutamate 5-kinase (369 aa).

K9 is an ATP binding site. Substrate-binding residues include S49, D136, and N148. ATP is bound by residues 168 to 169 (TD) and 210 to 216 (TGGMLTK). The region spanning 275 to 355 (QGSIWVDKGA…KGVLIYRDDW (81 aa)) is the PUA domain.

This sequence belongs to the glutamate 5-kinase family.

It is found in the cytoplasm. The catalysed reaction is L-glutamate + ATP = L-glutamyl 5-phosphate + ADP. Its pathway is amino-acid biosynthesis; L-proline biosynthesis; L-glutamate 5-semialdehyde from L-glutamate: step 1/2. Functionally, catalyzes the transfer of a phosphate group to glutamate to form L-glutamate 5-phosphate. This is Glutamate 5-kinase from Streptococcus pneumoniae serotype 4 (strain ATCC BAA-334 / TIGR4).